The chain runs to 469 residues: Glutamine synthetase (469 aa).

The GS beta-grasp domain maps to 16–100 (EGVQYVDLRF…MICDIYDPVT (85 aa)). The 362-residue stretch at 108-469 (TRYIAQKAEQ…PKEFELYWDI (362 aa)) folds into the GS catalytic domain. Mg(2+)-binding residues include Glu-133 and Glu-135. Glu-207 lines the ATP pocket. Mg(2+) is bound by residues Glu-212 and Glu-220. L-glutamate is bound by residues 264–265 (NG) and Gly-265. His-269 serves as a coordination point for Mg(2+). ATP is bound by residues 271-273 (HFS) and Ser-273. L-glutamate-binding residues include Arg-321, Glu-327, and Arg-339. The ATP site is built by Arg-339, Arg-344, and Lys-353. A Mg(2+)-binding site is contributed by Glu-358. Position 360 (Arg-360) interacts with L-glutamate. Tyr-398 bears the O-AMP-tyrosine mark.

Belongs to the glutamine synthetase family. In terms of assembly, oligomer of 12 subunits arranged in the form of two hexagons. The cofactor is Mg(2+).

Its subcellular location is the cytoplasm. The catalysed reaction is L-glutamate + NH4(+) + ATP = L-glutamine + ADP + phosphate + H(+). Its activity is regulated as follows. The activity of this enzyme could be controlled by adenylation under conditions of abundant glutamine. Catalyzes the ATP-dependent biosynthesis of glutamine from glutamate and ammonia. The sequence is that of Glutamine synthetase from Aquifex aeolicus (strain VF5).